A 341-amino-acid chain; its full sequence is Endolytic peptidoglycan transglycosylase RlpA (341 aa).

The first 26 residues, 1-26, serve as a signal peptide directing secretion; it reads MSKRVRSSLILPAVCGLGLAAVLLSS. A lipid anchor (N-palmitoyl cysteine) is attached at C27. C27 carries the S-diacylglycerol cysteine lipid modification. The SPOR domain maps to 260 to 341; it reads SLPADGLYLQ…LGQPTLVRPD (82 aa).

The protein belongs to the RlpA family.

The protein resides in the cell membrane. In terms of biological role, lytic transglycosylase with a strong preference for naked glycan strands that lack stem peptides. Required for efficient separation of daughter cells and maintenance of rod shape. The sequence is that of Endolytic peptidoglycan transglycosylase RlpA from Pseudomonas aeruginosa (strain UCBPP-PA14).